A 519-amino-acid chain; its full sequence is MLAKHSKLFFTGSVVFLIVAIVLASWGFPKIISTRIQKSIQLENSSMMYDKWVKLPIPLIFKVYFFNVTNAEGINEGERPILQEIGPYVYKQYRERTVLGYGPNDTIKYMLKKNFVFDPEASNGLTEDDDVTVINFPYMAALLTIQQMMPSAVAMVNRALEQFFSNLTDPFMRVKVKDLLFDGVFLNCDGDSPALSLVCAKLKADSPPTMRPAEDGVNGYYFSMFSHLNRTETGPYEMVRGTEDVFALGNIVSYKEKKSVSAWGDEYCNRINGSDASIFPPIDENNVPERLYTFEPEICRSLYASLAGKATLFNISTYYYEISSSALASKSANPDNKCYCKKDWSASHDGCLLMGVFNLMPCQGAPAIASLPHFYLASEELLEYFEDGVKPDKEKHNTYVYIDPVTGVVLKGVKRLQFNIELRNMPRVPQLQAVPTGLFPMLWIEEGAVMTPDLQQELRDAHALLSYAQLARWIILAAAIILAIIATITVARSTSLISWPRNSNSVNFIIGPMVNDKMR.

Topologically, residues 1-7 (MLAKHSK) are cytoplasmic. The chain crosses the membrane as a helical span at residues 8–28 (LFFTGSVVFLIVAIVLASWGF). Topologically, residues 29 to 469 (PKIISTRIQK…DAHALLSYAQ (441 aa)) are extracellular. N-linked (GlcNAc...) asparagine glycans are attached at residues Asn-44, Asn-67, Asn-104, Asn-166, Asn-229, Asn-272, and Asn-314. Intrachain disulfides connect Cys-268–Cys-338, Cys-299–Cys-362, and Cys-340–Cys-351. Residues 470–490 (LARWIILAAAIILAIIATITV) form a helical membrane-spanning segment. The Cytoplasmic segment spans residues 491–519 (ARSTSLISWPRNSNSVNFIIGPMVNDKMR).

It belongs to the CD36 family. Localizes to both male and female antennae but not the leg, wing, gut, head or thoracic ganglia. Detected throughout the sensory epithelium, associating with both sex-pheromone sensilla and plant-volatile sensilla. Differentially expressed among different sensilla and different neurons within a given sensillum.

Its subcellular location is the cell membrane. Functionally, plays an olfactory role that is not restricted to pheromone sensitivity. The polypeptide is Sensory neuron membrane protein 2 (Manduca sexta (Tobacco hawkmoth)).